Reading from the N-terminus, the 441-residue chain is GTPase Der (441 aa).

2 EngA-type G domains span residues 4 to 169 and 178 to 353; these read PVVA…PEDI and IKVA…DQAA. GTP-binding positions include 10-17, 57-61, 120-123, 184-191, 231-235, and 296-299; these read GRPNVGKS, DTGGI, NKVD, GKPNAGKS, DTAGI, and NKWD. One can recognise a KH-like domain in the interval 354–438; sequence FRISTGMLND…PIRFIHRQRE (85 aa).

This sequence belongs to the TRAFAC class TrmE-Era-EngA-EngB-Septin-like GTPase superfamily. EngA (Der) GTPase family. Associates with the 50S ribosomal subunit.

In terms of biological role, GTPase that plays an essential role in the late steps of ribosome biogenesis. This Ruminiclostridium cellulolyticum (strain ATCC 35319 / DSM 5812 / JCM 6584 / H10) (Clostridium cellulolyticum) protein is GTPase Der.